The primary structure comprises 51 residues: Large ribosomal subunit protein bL33 (51 aa).

Belongs to the bacterial ribosomal protein bL33 family.

The polypeptide is Large ribosomal subunit protein bL33 (Pseudomonas putida (strain ATCC 47054 / DSM 6125 / CFBP 8728 / NCIMB 11950 / KT2440)).